Here is a 329-residue protein sequence, read N- to C-terminus: Biotin synthase (329 aa).

The Radical SAM core domain maps to 48-278; the sequence is FLGTGVDLCS…DRKIAVCGGR (231 aa). Positions 66, 70, and 73 each coordinate [4Fe-4S] cluster. The [2Fe-2S] cluster site is built by Ser143 and Cys203.

It belongs to the radical SAM superfamily. Biotin synthase family. As to quaternary structure, homodimer. [4Fe-4S] cluster serves as cofactor. [2Fe-2S] cluster is required as a cofactor.

It catalyses the reaction (4R,5S)-dethiobiotin + (sulfur carrier)-SH + 2 reduced [2Fe-2S]-[ferredoxin] + 2 S-adenosyl-L-methionine = (sulfur carrier)-H + biotin + 2 5'-deoxyadenosine + 2 L-methionine + 2 oxidized [2Fe-2S]-[ferredoxin]. It functions in the pathway cofactor biosynthesis; biotin biosynthesis; biotin from 7,8-diaminononanoate: step 2/2. Functionally, catalyzes the conversion of dethiobiotin (DTB) to biotin by the insertion of a sulfur atom into dethiobiotin via a radical-based mechanism. The protein is Biotin synthase of Geobacter sulfurreducens (strain ATCC 51573 / DSM 12127 / PCA).